Reading from the N-terminus, the 394-residue chain is Mannosyl-3-phosphoglycerate synthase (394 aa).

This sequence belongs to the glycosyltransferase 2 family.

It is found in the cytoplasm. It carries out the reaction (2R)-3-phosphoglycerate + GDP-alpha-D-mannose = 2-O-(alpha-D-mannosyl)-3-phosphoglycerate + GDP + H(+). Its pathway is carbohydrate biosynthesis; 2-(alpha-D-mannosyl)-D-glycerate biosynthesis; 2-(alpha-D-mannosyl)-D-glycerate from GDP-alpha-D-mannose (MPG route): step 1/2. In terms of biological role, transfers a mannosyl group from GDP-mannose to phosphoglycerate to form mannosyl-3-phosphoglycerate (MPG). This is Mannosyl-3-phosphoglycerate synthase (mngA) from Pyrococcus furiosus (strain ATCC 43587 / DSM 3638 / JCM 8422 / Vc1).